The chain runs to 421 residues: Adenylosuccinate synthetase (421 aa).

GTP is bound by residues 11 to 17 (GDEGKGK) and 39 to 41 (GHT). The active-site Proton acceptor is the aspartate 12. 2 residues coordinate Mg(2+): aspartate 12 and glycine 39. IMP contacts are provided by residues 12–15 (DEGK), 37–40 (NAGH), threonine 124, arginine 138, glutamine 220, threonine 235, and arginine 299. Histidine 40 acts as the Proton donor in catalysis. Residue 295–301 (TTTGRPR) coordinates substrate. GTP-binding positions include arginine 301, 327–329 (KLD), and 409–411 (SVG).

The protein belongs to the adenylosuccinate synthetase family. Homodimer. It depends on Mg(2+) as a cofactor.

It is found in the cytoplasm. The catalysed reaction is IMP + L-aspartate + GTP = N(6)-(1,2-dicarboxyethyl)-AMP + GDP + phosphate + 2 H(+). The protein operates within purine metabolism; AMP biosynthesis via de novo pathway; AMP from IMP: step 1/2. Functionally, plays an important role in the de novo pathway of purine nucleotide biosynthesis. Catalyzes the first committed step in the biosynthesis of AMP from IMP. This Methanothrix thermoacetophila (strain DSM 6194 / JCM 14653 / NBRC 101360 / PT) (Methanosaeta thermophila) protein is Adenylosuccinate synthetase.